The following is a 275-amino-acid chain: Tryptase (275 aa).

A signal peptide spans 1–20 (MLNLLVLALPLLVSLVHTAP). The propeptide at 21-30 (APGQALERAG) is activation peptide. The 242-residue stretch at 31–272 (IVGGKEAPGH…YLDWIHQCIP (242 aa)) folds into the Peptidase S1 domain. A disulfide bond links Cys-59 and Cys-75. Catalysis depends on charge relay system residues His-74 and Asp-121. Asn-132 is a glycosylation site (N-linked (GlcNAc...) asparagine). 3 disulfide bridges follow: Cys-155-Cys-230, Cys-188-Cys-211, and Cys-220-Cys-248. Catalysis depends on Ser-224, which acts as the Charge relay system. N-linked (GlcNAc...) asparagine glycosylation is present at Asn-233.

This sequence belongs to the peptidase S1 family. Tryptase subfamily. As to quaternary structure, homotetramer.

The protein localises to the secreted. It carries out the reaction Preferential cleavage: Arg-|-Xaa, Lys-|-Xaa, but with more restricted specificity than trypsin.. In terms of biological role, tryptase is the major neutral protease present in mast cells and is secreted upon the coupled activation-degranulation response of this cell type. This Sus scrofa (Pig) protein is Tryptase (MCT7).